We begin with the raw amino-acid sequence, 340 residues long: NADH-quinone oxidoreductase subunit H (340 aa).

8 helical membrane-spanning segments follow: residues Thr-4–Leu-24, Tyr-78–Ile-98, Val-113–Ala-133, Val-151–Met-171, Met-184–Ile-204, Ser-244–Phe-264, Ile-273–Val-293, and Val-316–Val-336.

This sequence belongs to the complex I subunit 1 family. NDH-1 is composed of 14 different subunits. Subunits NuoA, H, J, K, L, M, N constitute the membrane sector of the complex.

It is found in the cell inner membrane. It carries out the reaction a quinone + NADH + 5 H(+)(in) = a quinol + NAD(+) + 4 H(+)(out). NDH-1 shuttles electrons from NADH, via FMN and iron-sulfur (Fe-S) centers, to quinones in the respiratory chain. The immediate electron acceptor for the enzyme in this species is believed to be ubiquinone. Couples the redox reaction to proton translocation (for every two electrons transferred, four hydrogen ions are translocated across the cytoplasmic membrane), and thus conserves the redox energy in a proton gradient. This subunit may bind ubiquinone. The chain is NADH-quinone oxidoreductase subunit H from Legionella pneumophila (strain Paris).